Consider the following 238-residue polypeptide: Large ribosomal subunit protein uL3 (238 aa).

2 disordered regions span residues 140 to 164 and 212 to 238; these read SHRSIGSTGGRQDPGKTWKNKKMPG and LPKEAPKPGKFKVAGGEAEAAAQQEGA. Glutamine 151 carries the N5-methylglutamine modification. Over residues 225-238 the composition is skewed to low complexity; that stretch reads AGGEAEAAAQQEGA.

Belongs to the universal ribosomal protein uL3 family. Part of the 50S ribosomal subunit. Forms a cluster with proteins L14 and L19. In terms of processing, methylated by PrmB.

One of the primary rRNA binding proteins, it binds directly near the 3'-end of the 23S rRNA, where it nucleates assembly of the 50S subunit. This is Large ribosomal subunit protein uL3 from Bradyrhizobium diazoefficiens (strain JCM 10833 / BCRC 13528 / IAM 13628 / NBRC 14792 / USDA 110).